Reading from the N-terminus, the 90-residue chain is Conotoxin Vc22.1 (90 aa).

Residues 1–18 form the signal peptide; the sequence is MMTRVFLAMFFLLVLTKG.

It belongs to the E superfamily. In terms of processing, contains 4 disulfide bonds. In terms of tissue distribution, expressed by the venom duct.

Its subcellular location is the secreted. The polypeptide is Conotoxin Vc22.1 (Conus victoriae (Queen Victoria cone)).